The sequence spans 117 residues: Pre-mRNA-splicing factor ini1 (117 aa).

Belongs to the PHF5 family.

The protein resides in the nucleus. In terms of biological role, required for pre-mRNA splicing. The polypeptide is Pre-mRNA-splicing factor ini1 (ini1) (Schizosaccharomyces pombe (strain 972 / ATCC 24843) (Fission yeast)).